The primary structure comprises 107 residues: UPF0145 protein CHY_0465 (107 aa).

Belongs to the UPF0145 family.

The protein is UPF0145 protein CHY_0465 of Carboxydothermus hydrogenoformans (strain ATCC BAA-161 / DSM 6008 / Z-2901).